A 121-amino-acid polypeptide reads, in one-letter code: Holo-[acyl-carrier-protein] synthase (121 aa).

Mg(2+)-binding residues include aspartate 8 and glutamate 55.

It belongs to the P-Pant transferase superfamily. AcpS family. Mg(2+) serves as cofactor.

Its subcellular location is the cytoplasm. It carries out the reaction apo-[ACP] + CoA = holo-[ACP] + adenosine 3',5'-bisphosphate + H(+). Functionally, transfers the 4'-phosphopantetheine moiety from coenzyme A to a Ser of acyl-carrier-protein. In Caldicellulosiruptor bescii (strain ATCC BAA-1888 / DSM 6725 / KCTC 15123 / Z-1320) (Anaerocellum thermophilum), this protein is Holo-[acyl-carrier-protein] synthase.